Reading from the N-terminus, the 138-residue chain is Abscisic stress-ripening protein 5 (138 aa).

A compositionally biased stretch (basic residues) spans Met1–His13. Disordered stretches follow at residues Met1–Gly27 and Gly106–Gly138.

Belongs to the abscisic acid and water stress-induced protein family.

Its subcellular location is the nucleus. The protein resides in the cytoplasm. Its function is as follows. Involved in tolerance to aluminum. Regulates the expression of different genes that collectively contribute to the protection of the cell in response to aluminum stress. In Oryza sativa subsp. indica (Rice), this protein is Abscisic stress-ripening protein 5.